Reading from the N-terminus, the 23-residue chain is Unknown protein 1 (23 aa).

This chain is Unknown protein 1, found in Coniferiporia sulphurascens (Laminated root rot fungus).